Consider the following 432-residue polypeptide: Enolase (432 aa).

(2R)-2-phosphoglycerate is bound at residue Gln-167. Glu-209 (proton donor) is an active-site residue. Positions 246, 290, and 317 each coordinate Mg(2+). Residues Lys-342, Arg-371, Ser-372, and Lys-393 each coordinate (2R)-2-phosphoglycerate. The Proton acceptor role is filled by Lys-342.

Belongs to the enolase family. As to quaternary structure, component of the RNA degradosome, a multiprotein complex involved in RNA processing and mRNA degradation. Mg(2+) serves as cofactor.

Its subcellular location is the cytoplasm. The protein resides in the secreted. It localises to the cell surface. The enzyme catalyses (2R)-2-phosphoglycerate = phosphoenolpyruvate + H2O. The protein operates within carbohydrate degradation; glycolysis; pyruvate from D-glyceraldehyde 3-phosphate: step 4/5. Catalyzes the reversible conversion of 2-phosphoglycerate (2-PG) into phosphoenolpyruvate (PEP). It is essential for the degradation of carbohydrates via glycolysis. This is Enolase from Salmonella agona (strain SL483).